Reading from the N-terminus, the 292-residue chain is 4-hydroxy-tetrahydrodipicolinate synthase (292 aa).

Pyruvate is bound at residue T48. Residue Y136 is the Proton donor/acceptor of the active site. K164 acts as the Schiff-base intermediate with substrate in catalysis. Residue I204 participates in pyruvate binding.

Belongs to the DapA family. As to quaternary structure, homotetramer; dimer of dimers.

The protein localises to the cytoplasm. It catalyses the reaction L-aspartate 4-semialdehyde + pyruvate = (2S,4S)-4-hydroxy-2,3,4,5-tetrahydrodipicolinate + H2O + H(+). It functions in the pathway amino-acid biosynthesis; L-lysine biosynthesis via DAP pathway; (S)-tetrahydrodipicolinate from L-aspartate: step 3/4. Catalyzes the condensation of (S)-aspartate-beta-semialdehyde [(S)-ASA] and pyruvate to 4-hydroxy-tetrahydrodipicolinate (HTPA). The protein is 4-hydroxy-tetrahydrodipicolinate synthase of Acetivibrio thermocellus (strain ATCC 27405 / DSM 1237 / JCM 9322 / NBRC 103400 / NCIMB 10682 / NRRL B-4536 / VPI 7372) (Clostridium thermocellum).